We begin with the raw amino-acid sequence, 227 residues long: Triosephosphate isomerase (227 aa).

6–8 serves as a coordination point for substrate; sequence NLK. His85 functions as the Electrophile in the catalytic mechanism. Glu152 (proton acceptor) is an active-site residue. Residues Gly158 and Ser188 each coordinate substrate.

Belongs to the triosephosphate isomerase family. Homodimer.

It is found in the cytoplasm. It carries out the reaction D-glyceraldehyde 3-phosphate = dihydroxyacetone phosphate. It functions in the pathway carbohydrate biosynthesis; gluconeogenesis. Its pathway is carbohydrate degradation; glycolysis; D-glyceraldehyde 3-phosphate from glycerone phosphate: step 1/1. Functionally, involved in the gluconeogenesis. Catalyzes stereospecifically the conversion of dihydroxyacetone phosphate (DHAP) to D-glyceraldehyde-3-phosphate (G3P). This chain is Triosephosphate isomerase, found in Campylobacter concisus (strain 13826).